The following is a 421-amino-acid chain: Synaptotagmin-1 (421 aa).

The disordered stretch occupies residues 1-40 (MVSESHHEALAAPPATTVAAAPPSNVTEPASPGGGGGKED). The Vesicular segment spans residues 1–60 (MVSESHHEALAAPPATTVAAAPPSNVTEPASPGGGGGKEDAFSKLKEKFMNELNKIPLPP). Positions 10–23 (LAAPPATTVAAAPP) are enriched in low complexity. An N-linked (GlcNAc...) asparagine glycan is attached at Asn25. A helical membrane pass occupies residues 61–81 (WALIAIAIVAVLLILTCCFCL). Residues Cys77, Cys78, Cys80, Cys82, and Cys85 are each lipidated (S-palmitoyl cysteine). The Cytoplasmic segment spans residues 82 to 421 (CKKCLFKKKN…EVDAMLAVKK (340 aa)). A disordered region spans residues 94–139 (KGKEKGGKNAINMKDVKDLGKTMKDQDDDAETGLTDGEEKEEPKEV). Positions 107–118 (KDVKDLGKTMKD) are enriched in basic and acidic residues. Residues 119–133 (QDDDAETGLTDGEEK) show a composition bias toward acidic residues. A phospholipid binding region spans residues 135–381 (EPKEVEKLGK…AIGKVFVGYN (247 aa)). C2 domains lie at 141-260 (KLGK…EEWR) and 272-405 (KLGD…AQWH). Residues Leu171, Asp172, Asp178, Asp230, Phe231, Asp232, Ser235, Lys236, Asp238, Asp303, Asp309, Asp363, Asp365, and Asp371 each coordinate Ca(2+).

Belongs to the synaptotagmin family. Homotetramer. The cofactor is Ca(2+).

Its subcellular location is the cytoplasmic vesicle. The protein resides in the secretory vesicle membrane. The protein localises to the secretory vesicle. It is found in the synaptic vesicle membrane. It localises to the chromaffin granule membrane. Its subcellular location is the cytoplasm. Functionally, calcium sensor that participates in triggering neurotransmitter release at the synapse. May have a regulatory role in the membrane interactions during trafficking of synaptic vesicles at the active zone of the synapse. It binds acidic phospholipids with a specificity that requires the presence of both an acidic head group and a diacyl backbone. May play a role in dendrite formation by melanocytes. May play a role in regulating the secretion of hormones relevant to the reproduction and egg-laying of female geese. This Anser cygnoides (Swan goose) protein is Synaptotagmin-1.